The sequence spans 34 residues: Surfactant protein C (34 aa).

The S-palmitoyl cysteine moiety is linked to residue Cys4.

It localises to the secreted. Its subcellular location is the extracellular space. The protein localises to the surface film. Pulmonary surfactant associated proteins promote alveolar stability by lowering the surface tension at the air-liquid interface in the peripheral air spaces. The polypeptide is Surfactant protein C (SFTPC) (Canis lupus familiaris (Dog)).